Reading from the N-terminus, the 312-residue chain is MEKEIVVVTGPTASGKSAACDIIADDLNCRVINCDSKQIYHGVPILTDQPVSVRDIHKLYGYVAPTQNYSAGLWLQDVKREVQQAWDDNVLPVITGGSGMYINSLVNGISDIPAIDPEVRKTARNLLESLGNAAFYEALVARDSNAARLHHNNTHQILRAFEVLEQTGTSIFTWWERSPRIKPFENCEVLVLLPPRNKLYDKINRRFLTMMQTDAISEVKYLMSLNLPMHAPVMKAHGAPEIVQYLQGKIEFMEAVEIAQKNTRHYAKRQCTWFRTQLPCDTRFFSSQNEIIDHVLAQYASKYPRTHTRPCN.

10–17 (GPTASGKS) is a binding site for ATP. 12-17 (TASGKS) serves as a coordination point for substrate. The tract at residues 35–38 (DSKQ) is interaction with substrate tRNA.

This sequence belongs to the IPP transferase family. In terms of assembly, monomer. Mg(2+) is required as a cofactor.

The catalysed reaction is adenosine(37) in tRNA + dimethylallyl diphosphate = N(6)-dimethylallyladenosine(37) in tRNA + diphosphate. Functionally, catalyzes the transfer of a dimethylallyl group onto the adenine at position 37 in tRNAs that read codons beginning with uridine, leading to the formation of N6-(dimethylallyl)adenosine (i(6)A). The sequence is that of tRNA dimethylallyltransferase from Anaplasma phagocytophilum (strain HZ).